The primary structure comprises 470 residues: Cysteine--tRNA ligase (470 aa).

A Zn(2+)-binding site is contributed by Cys27. Positions 29–39 match the 'HIGH' region motif; it reads PTVYNFFHIGN. Zn(2+) is bound by residues Cys211, His236, and Glu240. Positions 268–272 match the 'KMSKS' region motif; sequence KMSKS. Residue Lys271 coordinates ATP.

It belongs to the class-I aminoacyl-tRNA synthetase family. Monomer. It depends on Zn(2+) as a cofactor.

The protein resides in the cytoplasm. It carries out the reaction tRNA(Cys) + L-cysteine + ATP = L-cysteinyl-tRNA(Cys) + AMP + diphosphate. The chain is Cysteine--tRNA ligase from Clostridium botulinum (strain Alaska E43 / Type E3).